Consider the following 269-residue polypeptide: uncharacterized protein (269 aa).

Residues Ala5–Lys73 enclose the HTH gntR-type domain. Positions Ile33–Lys52 form a DNA-binding region, H-T-H motif.

The imp locus inhibits the extrachromosomal maintenance of the Streptomyces plasmid SLP1. This is an uncharacterized protein from Streptomyces coelicolor (strain ATCC BAA-471 / A3(2) / M145).